The chain runs to 174 residues: Gamma-crystallin F (174 aa).

2 Beta/gamma crystallin 'Greek key' domains span residues 2-40 (GKIT…RVDS) and 41-83 (GCWM…HLIP). Positions 84–87 (HSSS) are connecting peptide. 2 Beta/gamma crystallin 'Greek key' domains span residues 88 to 128 (HRIR…HVIE) and 129 to 171 (GYWV…RRIM).

The protein belongs to the beta/gamma-crystallin family.

Crystallins are the dominant structural components of the vertebrate eye lens. This is Gamma-crystallin F (Crygf) from Rattus norvegicus (Rat).